Reading from the N-terminus, the 303-residue chain is Acetylglutamate kinase (303 aa).

Residues 75-76 (GG), Arg-97, and Asn-194 each bind substrate.

It belongs to the acetylglutamate kinase family. ArgB subfamily.

The protein resides in the cytoplasm. The catalysed reaction is N-acetyl-L-glutamate + ATP = N-acetyl-L-glutamyl 5-phosphate + ADP. It functions in the pathway amino-acid biosynthesis; L-arginine biosynthesis; N(2)-acetyl-L-ornithine from L-glutamate: step 2/4. Catalyzes the ATP-dependent phosphorylation of N-acetyl-L-glutamate. The sequence is that of Acetylglutamate kinase from Gloeobacter violaceus (strain ATCC 29082 / PCC 7421).